A 212-amino-acid chain; its full sequence is Inactive ribonuclease-like protein 10 (212 aa).

The N-terminal stretch at 1 to 24 (MKVTLVHLLFMMLLLLLGLGVGLG) is a signal peptide. Residues asparagine 129 and asparagine 204 are each glycosylated (N-linked (GlcNAc...) asparagine).

The protein belongs to the pancreatic ribonuclease family. In terms of processing, the N-terminus is blocked. Glycosylated. As to expression, male-specific expression in proximal caput of the epididymis.

It is found in the secreted. Functionally, secreted proximal epididymal protein required for post-testicular sperm maturation and male fertility. May be involved in sperm adhesion to the egg zona pellucida. Does not have ribonuclease activity. The protein is Inactive ribonuclease-like protein 10 (Rnase10) of Rattus norvegicus (Rat).